Reading from the N-terminus, the 150-residue chain is Cytochrome c oxidase subunit 5A, mitochondrial (150 aa).

Residues 1-41 constitute a mitochondrion transit peptide; that stretch reads MLGAALRRCAVAATTWAGPRGHLHSARTPGPAAAIQSVRCY. The SIFI-degron signature appears at 2-17; that stretch reads LGAALRRCAVAATTWA. Lysine 87 and lysine 113 each carry N6-acetyllysine. At threonine 141 the chain carries Phosphothreonine.

Belongs to the cytochrome c oxidase subunit 5A family. Component of the cytochrome c oxidase (complex IV, CIV), a multisubunit enzyme composed of 14 subunits. The complex is composed of a catalytic core of 3 subunits MT-CO1, MT-CO2 and MT-CO3, encoded in the mitochondrial DNA, and 11 supernumerary subunits COX4I, COX5A, COX5B, COX6A, COX6B, COX6C, COX7A, COX7B, COX7C, COX8 and NDUFA4, which are encoded in the nuclear genome. The complex exists as a monomer or a dimer and forms supercomplexes (SCs) in the inner mitochondrial membrane with NADH-ubiquinone oxidoreductase (complex I, CI) and ubiquinol-cytochrome c oxidoreductase (cytochrome b-c1 complex, complex III, CIII), resulting in different assemblies (supercomplex SCI(1)III(2)IV(1) and megacomplex MCI(2)III(2)IV(2)). Interacts with AFG1L. Interacts with RAB5IF. In response to mitochondrial stress, the precursor protein is ubiquitinated by the SIFI complex in the cytoplasm before mitochondrial import, leading to its degradation. Within the SIFI complex, UBR4 initiates ubiquitin chain that are further elongated or branched by KCMF1.

It localises to the mitochondrion inner membrane. It functions in the pathway energy metabolism; oxidative phosphorylation. Component of the cytochrome c oxidase, the last enzyme in the mitochondrial electron transport chain which drives oxidative phosphorylation. The respiratory chain contains 3 multisubunit complexes succinate dehydrogenase (complex II, CII), ubiquinol-cytochrome c oxidoreductase (cytochrome b-c1 complex, complex III, CIII) and cytochrome c oxidase (complex IV, CIV), that cooperate to transfer electrons derived from NADH and succinate to molecular oxygen, creating an electrochemical gradient over the inner membrane that drives transmembrane transport and the ATP synthase. Cytochrome c oxidase is the component of the respiratory chain that catalyzes the reduction of oxygen to water. Electrons originating from reduced cytochrome c in the intermembrane space (IMS) are transferred via the dinuclear copper A center (CU(A)) of subunit 2 and heme A of subunit 1 to the active site in subunit 1, a binuclear center (BNC) formed by heme A3 and copper B (CU(B)). The BNC reduces molecular oxygen to 2 water molecules using 4 electrons from cytochrome c in the IMS and 4 protons from the mitochondrial matrix. In Symphalangus syndactylus (Siamang), this protein is Cytochrome c oxidase subunit 5A, mitochondrial (COX5A).